A 364-amino-acid polypeptide reads, in one-letter code: Pectinesterase (364 aa).

Residues M1–S22 form the signal peptide. N-linked (GlcNAc...) asparagine glycosylation occurs at N103. The active site involves D220.

The protein resides in the secreted. It catalyses the reaction [(1-&gt;4)-alpha-D-galacturonosyl methyl ester](n) + n H2O = [(1-&gt;4)-alpha-D-galacturonosyl](n) + n methanol + n H(+). The protein operates within glycan metabolism; pectin degradation; 2-dehydro-3-deoxy-D-gluconate from pectin: step 1/5. Functionally, catalyzes the demethylesterification of homogalacturonan components of pectin. This is Pectinesterase from Parthenium hysterophorus (Santa Maria feverfew).